The following is a 182-amino-acid chain: Large ribosomal subunit protein bL25 (182 aa).

The protein belongs to the bacterial ribosomal protein bL25 family. CTC subfamily. In terms of assembly, part of the 50S ribosomal subunit; part of the 5S rRNA/L5/L18/L25 subcomplex. Contacts the 5S rRNA. Binds to the 5S rRNA independently of L5 and L18.

In terms of biological role, this is one of the proteins that binds to the 5S RNA in the ribosome where it forms part of the central protuberance. In Borreliella burgdorferi (strain ATCC 35210 / DSM 4680 / CIP 102532 / B31) (Borrelia burgdorferi), this protein is Large ribosomal subunit protein bL25.